A 171-amino-acid chain; its full sequence is uncharacterized protein (171 aa).

The region spanning 30–97 is the HTH gntR-type domain; sequence AGRVSAAYHA…PKKGIIICAL (68 aa). A DNA-binding region (H-T-H motif) is located at residues 57 to 76; it reads EIEIARQLGMSRTPVHEAMA.

This is an uncharacterized protein from Agrobacterium vitis (Rhizobium vitis).